A 361-amino-acid chain; its full sequence is UPF0283 membrane protein Smed_1530 (361 aa).

The segment at Met1–Asp40 is disordered. Over residues Ala22–Pro31 the composition is skewed to basic and acidic residues. 2 helical membrane-spanning segments follow: residues Phe76–Val96 and Trp109–Val129.

This sequence belongs to the UPF0283 family.

The protein resides in the cell inner membrane. The chain is UPF0283 membrane protein Smed_1530 from Sinorhizobium medicae (strain WSM419) (Ensifer medicae).